The primary structure comprises 396 residues: MAEKEHYERTKPHVNIGTIGHVDHGKTTLTAAITKVLAAKGLAKAEDYADIDAAPEEKERGITINTAHVEYETEKRHYAHIDAPGHADYVKNMITGAAQMDGAILVVAATDGPMPQTREHILLARQVGVQYIVVFLNKTDLVDDDELVDLVEMEVRDLLSEYDFPGDDVPVVRGSALKALEGDPEQEKVILHLMDVIDDYIPTPKRPTDKPFMMPVEDVFTITGRGTVASGRIDRGTVKVGDEVEIVGLTEDVLKSTVTGLEMFHKTLDLGEAGDNVGVLLRGISHDQIQRGQVLAEPGSIQTHKNFKGEVYVMTKEEGGRHTPFFSNYRPQFYFHTTDVTGTIELPDGVEMVMPGDNVTFTVNLQKPVALEKGLKFTIREGGHTVGAGVVSDILD.

The tr-type G domain maps to Lys11–Lys205. The interval Gly20–Thr27 is G1. Gly20–Thr27 is a GTP binding site. Thr27 contacts Mg(2+). Positions Gly61–Asn65 are G2. The tract at residues Asp82–Gly85 is G3. Residues Asp82–His86 and Asn137–Asp140 contribute to the GTP site. The tract at residues Asn137 to Asp140 is G4. The tract at residues Ser175–Leu177 is G5.

Belongs to the TRAFAC class translation factor GTPase superfamily. Classic translation factor GTPase family. EF-Tu/EF-1A subfamily. As to quaternary structure, monomer.

Its subcellular location is the cytoplasm. It carries out the reaction GTP + H2O = GDP + phosphate + H(+). In terms of biological role, GTP hydrolase that promotes the GTP-dependent binding of aminoacyl-tRNA to the A-site of ribosomes during protein biosynthesis. The protein is Elongation factor Tu of Limosilactobacillus reuteri (strain DSM 20016) (Lactobacillus reuteri).